The primary structure comprises 268 residues: Tryptophan synthase alpha chain (268 aa).

Residues E49 and D60 each act as proton acceptor in the active site.

This sequence belongs to the TrpA family. As to quaternary structure, tetramer of two alpha and two beta chains.

It carries out the reaction (1S,2R)-1-C-(indol-3-yl)glycerol 3-phosphate + L-serine = D-glyceraldehyde 3-phosphate + L-tryptophan + H2O. The protein operates within amino-acid biosynthesis; L-tryptophan biosynthesis; L-tryptophan from chorismate: step 5/5. Its function is as follows. The alpha subunit is responsible for the aldol cleavage of indoleglycerol phosphate to indole and glyceraldehyde 3-phosphate. The protein is Tryptophan synthase alpha chain of Shigella sonnei (strain Ss046).